Here is a 350-residue protein sequence, read N- to C-terminus: Methionine import ATP-binding protein MetN (350 aa).

One can recognise an ABC transporter domain in the interval 9 to 245 (LKDVDVEFHG…PQQQLTKDFI (237 aa)). Residue 43-50 (GYSGAGKS) participates in ATP binding.

The protein belongs to the ABC transporter superfamily. Methionine importer (TC 3.A.1.24) family. As to quaternary structure, the complex is composed of two ATP-binding proteins (MetN), two transmembrane proteins (MetI) and a solute-binding protein (MetQ).

The protein resides in the cell membrane. The catalysed reaction is L-methionine(out) + ATP + H2O = L-methionine(in) + ADP + phosphate + H(+). It catalyses the reaction D-methionine(out) + ATP + H2O = D-methionine(in) + ADP + phosphate + H(+). Part of the ABC transporter complex MetNIQ involved in methionine import. Responsible for energy coupling to the transport system. This is Methionine import ATP-binding protein MetN from Lacticaseibacillus paracasei (strain ATCC 334 / BCRC 17002 / CCUG 31169 / CIP 107868 / KCTC 3260 / NRRL B-441) (Lactobacillus paracasei).